The chain runs to 39 residues: Cytochrome b6-f complex subunit 5 (39 aa).

Residues L5–A25 form a helical membrane-spanning segment.

The protein belongs to the PetG family. The 4 large subunits of the cytochrome b6-f complex are cytochrome b6, subunit IV (17 kDa polypeptide, PetD), cytochrome f and the Rieske protein, while the 4 small subunits are PetG, PetL, PetM and PetN. The complex functions as a dimer.

The protein resides in the plastid. The protein localises to the chloroplast thylakoid membrane. Component of the cytochrome b6-f complex, which mediates electron transfer between photosystem II (PSII) and photosystem I (PSI), cyclic electron flow around PSI, and state transitions. PetG is required for either the stability or assembly of the cytochrome b6-f complex. This Pleurastrum terricola (Filamentous green alga) protein is Cytochrome b6-f complex subunit 5.